The sequence spans 366 residues: tRNA(Met) cytidine acetate ligase (366 aa).

ATP is bound by residues Ile7 to Leu20, Gly96, Asn152, and Arg175.

Belongs to the TmcAL family.

It localises to the cytoplasm. The enzyme catalyses cytidine(34) in elongator tRNA(Met) + acetate + ATP = N(4)-acetylcytidine(34) in elongator tRNA(Met) + AMP + diphosphate. In terms of biological role, catalyzes the formation of N(4)-acetylcytidine (ac(4)C) at the wobble position of elongator tRNA(Met), using acetate and ATP as substrates. First activates an acetate ion to form acetyladenylate (Ac-AMP) and then transfers the acetyl group to tRNA to form ac(4)C34. The sequence is that of tRNA(Met) cytidine acetate ligase from Streptococcus equi subsp. zooepidemicus (strain MGCS10565).